Reading from the N-terminus, the 82-residue chain is ATP synthase subunit c, chloroplastic (82 aa).

2 helical membrane passes run 3-23 (PLISAASVLAAGLAVGLASIG) and 57-77 (FAFMESLTIYGLVVALALLFA).

The protein belongs to the ATPase C chain family. F-type ATPases have 2 components, F(1) - the catalytic core - and F(0) - the membrane proton channel. F(1) has five subunits: alpha(3), beta(3), gamma(1), delta(1), epsilon(1). F(0) has four main subunits: a(1), b(1), b'(1) and c(10-14). The alpha and beta chains form an alternating ring which encloses part of the gamma chain. F(1) is attached to F(0) by a central stalk formed by the gamma and epsilon chains, while a peripheral stalk is formed by the delta, b and b' chains.

It is found in the plastid. Its subcellular location is the chloroplast thylakoid membrane. Functionally, f(1)F(0) ATP synthase produces ATP from ADP in the presence of a proton or sodium gradient. F-type ATPases consist of two structural domains, F(1) containing the extramembraneous catalytic core and F(0) containing the membrane proton channel, linked together by a central stalk and a peripheral stalk. During catalysis, ATP synthesis in the catalytic domain of F(1) is coupled via a rotary mechanism of the central stalk subunits to proton translocation. Key component of the F(0) channel; it plays a direct role in translocation across the membrane. A homomeric c-ring of between 10-14 subunits forms the central stalk rotor element with the F(1) delta and epsilon subunits. The polypeptide is ATP synthase subunit c, chloroplastic (Mesostigma viride (Green alga)).